A 426-amino-acid polypeptide reads, in one-letter code: Glutamate-1-semialdehyde 2,1-aminomutase (426 aa).

The residue at position 265 (lysine 265) is an N6-(pyridoxal phosphate)lysine.

The protein belongs to the class-III pyridoxal-phosphate-dependent aminotransferase family. HemL subfamily. Homodimer. The cofactor is pyridoxal 5'-phosphate.

The protein localises to the cytoplasm. It catalyses the reaction (S)-4-amino-5-oxopentanoate = 5-aminolevulinate. It functions in the pathway porphyrin-containing compound metabolism; protoporphyrin-IX biosynthesis; 5-aminolevulinate from L-glutamyl-tRNA(Glu): step 2/2. In Pectobacterium atrosepticum (strain SCRI 1043 / ATCC BAA-672) (Erwinia carotovora subsp. atroseptica), this protein is Glutamate-1-semialdehyde 2,1-aminomutase.